We begin with the raw amino-acid sequence, 808 residues long: Bifunctional uridylyltransferase/uridylyl-removing enzyme (808 aa).

A uridylyltransferase region spans residues 1–315 (MEAESPCAAS…ALVRRPKRRP (315 aa)). Positions 316–609 (LDEGVVEYAG…EISPRDGERI (294 aa)) are uridylyl-removing. The region spanning 430-544 (VDRHVVETAV…LEVLHALSEA (115 aa)) is the HD domain. ACT domains follow at residues 610–686 (DAVI…GMLQ) and 730–805 (ILEV…VDEP).

It belongs to the GlnD family. Mg(2+) is required as a cofactor.

The catalysed reaction is [protein-PII]-L-tyrosine + UTP = [protein-PII]-uridylyl-L-tyrosine + diphosphate. It carries out the reaction [protein-PII]-uridylyl-L-tyrosine + H2O = [protein-PII]-L-tyrosine + UMP + H(+). Functionally, modifies, by uridylylation and deuridylylation, the PII regulatory protein (GlnB), in response to the nitrogen status of the cell that GlnD senses through the glutamine level. Under low glutamine levels, catalyzes the conversion of the PII protein and UTP to PII-UMP and PPi, while under higher glutamine levels, GlnD hydrolyzes PII-UMP to PII and UMP (deuridylylation). Thus, controls uridylylation state and activity of the PII protein, and plays an important role in the regulation of nitrogen assimilation and metabolism. In Mycobacterium tuberculosis (strain CDC 1551 / Oshkosh), this protein is Bifunctional uridylyltransferase/uridylyl-removing enzyme.